The following is a 234-amino-acid chain: Synaptogyrin-1 (234 aa).

M1 bears the N-acetylmethionine mark. Over 1–23 (MEGGAYGAGKAGGAFDPYALVRQ) the chain is Cytoplasmic. An MARVEL domain is found at 20–173 (LVRQPHTILR…QAVLAFQRYQ (154 aa)). A helical membrane pass occupies residues 24-44 (PHTILRVVSWLFSIVVFGSIV). Residues 45–71 (NEGYLNSASEGEEFCIYNRNPNACSYG) lie on the Lumenal side of the membrane. A helical transmembrane segment spans residues 72–92 (VAVGVLAFLTCLLYLALDVYF). Residues 93 to 103 (PQISSVKDRKK) are Cytoplasmic-facing. Residues 104–124 (AVLSDIGVSAFWAFLWFVGFC) form a helical membrane-spanning segment. Over 125-148 (YLANQWQVSKPKDNPLNEGTDAAR) the chain is Lumenal. Residues 149–169 (AAIAFSFFSIFTWAGQAVLAF) form a helical membrane-spanning segment. Residues 170 to 234 (QRYQIGADSA…EPQGYQSQGY (65 aa)) are Cytoplasmic-facing. The segment at 192 to 234 (SSMPYAPYVEPSTGPDPAGMGGTYQQPANTFDTEPQGYQSQGY) is disordered. Polar residues predominate over residues 214-234 (TYQQPANTFDTEPQGYQSQGY).

It belongs to the synaptogyrin family.

The protein localises to the cytoplasmic vesicle. It localises to the secretory vesicle. It is found in the synaptic vesicle membrane. Its subcellular location is the melanosome. Its function is as follows. May play a role in regulated exocytosis. Modulates the localization of synaptophysin/SYP into synaptic-like microvesicles and may therefore play a role in synaptic-like microvesicle formation and/or maturation. Involved in the regulation of short-term and long-term synaptic plasticity. This is Synaptogyrin-1 from Pongo abelii (Sumatran orangutan).